The primary structure comprises 277 residues: F420-dependent methylenetetrahydromethanopterin dehydrogenase (277 aa).

A disordered region spans residues 249 to 277; that stretch reads EKATDSVSRKPHGADGKRLNKTKLMEKPE.

The protein belongs to the MTD family.

It carries out the reaction 5,10-methylenetetrahydromethanopterin + oxidized coenzyme F420-(gamma-L-Glu)(n) + 2 H(+) = 5,10-methenyl-5,6,7,8-tetrahydromethanopterin + reduced coenzyme F420-(gamma-L-Glu)(n). Its pathway is one-carbon metabolism; methanogenesis from CO(2); 5,10-methylene-5,6,7,8-tetrahydromethanopterin from 5,10-methenyl-5,6,7,8-tetrahydromethanopterin (coenzyme F420 route): step 1/1. In terms of biological role, catalyzes the reversible reduction of methenyl-H(4)MPT(+) to methylene-H(4)MPT. This chain is F420-dependent methylenetetrahydromethanopterin dehydrogenase, found in Methanococcus aeolicus (strain ATCC BAA-1280 / DSM 17508 / OCM 812 / Nankai-3).